The chain runs to 468 residues: Beta-monoglucosyldiacylglycerol synthase (468 aa).

The next 4 membrane-spanning stretches (helical) occupy residues 51 to 71 (AALV…VSWG), 72 to 92 (SIFI…VVFA), 361 to 381 (FMLT…MAVV), and 387 to 407 (MLGP…FAGL).

It belongs to the glycosyltransferase 2 family. Mg(2+) serves as cofactor.

The protein localises to the membrane. The enzyme catalyses a 1,2-diacyl-sn-glycerol + UDP-alpha-D-glucose = a 1,2-diacyl-3-O-(beta-D-glucopyranosyl)-sn-glycerol + UDP + H(+). Its function is as follows. Glucosyltransferase involved in the biosynthesis of the non-bilayer-forming membrane lipid beta-monoglucosyldiacylglycerol which contributes to regulate the properties and stability of the membrane. Catalyzes the transfer of a glucosyl residue from UDP-Glc to diacylglycerol (DAG) acceptor to form the corresponding beta-glucosyl-DAG (1,2-diacyl-3-O-(beta-D-glucopyranosyl)-sn-glycerol). It can only use UDP-Glc as sugar donor. This chain is Beta-monoglucosyldiacylglycerol synthase, found in Trichormus variabilis (strain ATCC 29413 / PCC 7937) (Anabaena variabilis).